The primary structure comprises 607 residues: Matrix metalloproteinase-16 (607 aa).

The first 31 residues, 1–31 (MILLAFSSGRRLDFVHRSGVFFFQTLLWILC), serve as a signal peptide directing secretion. A propeptide spanning residues 32–119 (ATVCGTEQYF…SSKFNIRRKR (88 aa)) is cleaved from the precursor. A glycan (N-linked (GlcNAc...) asparagine) is linked at asparagine 83. A Cysteine switch motif is present at residues 99–106 (PRCGVPDQ). Zn(2+) is bound at residue cysteine 101. Residues 120-564 (YALTGQKWQH…LDNTASTVKA (445 aa)) lie on the Extracellular side of the membrane. Residue aspartate 183 coordinates Ca(2+). Zn(2+)-binding residues include histidine 193 and aspartate 195. Ca(2+) is bound by residues aspartate 200, glycine 201, glycine 203, and phenylalanine 205. Histidine 208 contributes to the Zn(2+) binding site. Residues glycine 215, glycine 217, and aspartate 219 each coordinate Ca(2+). Residue histidine 221 participates in Zn(2+) binding. Ca(2+)-binding residues include aspartate 223 and glutamate 226. Histidine 246 lines the Zn(2+) pocket. Glutamate 247 is a catalytic residue. Residues histidine 250 and histidine 256 each contribute to the Zn(2+) site. The segment at 281–340 (DDLQGIQKIYGPPDKIPPPTRPLPTVPPHRSVPPADPRKNDRPKPPRPPTGRPSYPGAKP) is disordered. Positions 294–315 (DKIPPPTRPLPTVPPHRSVPPA) are enriched in pro residues. Hemopexin repeat units follow at residues 340–388 (PNIC…WRGL), 389–434 (PPSI…GNGI), 436–484 (PHGI…KGIP), and 485–532 (ESPQ…FMGC). A disulfide bridge links cysteine 343 with cysteine 532. A helical membrane pass occupies residues 565–585 (IAIVIPCILALCLLVLVYTVF). The Cytoplasmic segment spans residues 586 to 607 (QFKRKGTPRHILYCKRSMQEWV).

This sequence belongs to the peptidase M10A family. As to quaternary structure, interacts with CSPG4 through CSPG4 chondroitin sulfate glycosaminoglycan. The cofactor is Zn(2+). Requires Ca(2+) as cofactor. Post-translationally, the precursor is cleaved by a furin endopeptidase. As to expression, strongly expressed in the lung, brain and smooth muscle cells. Weakly detectable in the spleen and liver and indetectable in the heart, skeletal muscle and kidney.

The protein resides in the cell membrane. The protein localises to the secreted. Its subcellular location is the extracellular space. It is found in the extracellular matrix. Functionally, endopeptidase that degrades various components of the extracellular matrix, such as collagen type III and fibronectin. Activates progelatinase A. Involved in the matrix remodeling of blood vessels. The short isoform efficiently converts progelatinase A to the intermediate form but not to the mature one. It has no effect on type I, II, IV and V collagen. However, upon interaction with CSPG4, it may be involved in degradation and invasion of type I collagen by melanoma cells. The chain is Matrix metalloproteinase-16 (Mmp16) from Rattus norvegicus (Rat).